Consider the following 361-residue polypeptide: D-alanine--D-alanine ligase (361 aa).

One can recognise an ATP-grasp domain in the interval 149–353 (KKLMAAEGLP…YEELLDVLVQ (205 aa)). 176–231 (KKLLGLPVFVKPARGGSSIGISKVSRWEDLPAAVDLARQHDEKVIVESEIVGPEVE) is an ATP binding site. Residues Asp-308, Glu-320, and Asn-322 each contribute to the Mg(2+) site.

The protein belongs to the D-alanine--D-alanine ligase family. Mg(2+) serves as cofactor. Requires Mn(2+) as cofactor.

It localises to the cytoplasm. It catalyses the reaction 2 D-alanine + ATP = D-alanyl-D-alanine + ADP + phosphate + H(+). It participates in cell wall biogenesis; peptidoglycan biosynthesis. Its function is as follows. Cell wall formation. The chain is D-alanine--D-alanine ligase from Corynebacterium efficiens (strain DSM 44549 / YS-314 / AJ 12310 / JCM 11189 / NBRC 100395).